The primary structure comprises 144 residues: Ribonuclease VapC37 (144 aa).

One can recognise a PINc domain in the interval 3 to 137 (IVDANVLLYA…DFGRFEGVRW (135 aa)). Mg(2+) is bound by residues Asp5 and Asp90.

Belongs to the PINc/VapC protein family. It depends on Mg(2+) as a cofactor.

Its subcellular location is the secreted. Its function is as follows. Probable toxic component of a type II toxin-antitoxin (TA) system. An RNase. Upon expression in M.smegmatis inhibits colony formation. The putative cognate antitoxin is VapB37. The chain is Ribonuclease VapC37 from Mycobacterium tuberculosis (strain ATCC 25618 / H37Rv).